A 244-amino-acid chain; its full sequence is 3-deoxy-manno-octulosonate cytidylyltransferase (244 aa).

Belongs to the KdsB family.

The protein localises to the cytoplasm. It catalyses the reaction 3-deoxy-alpha-D-manno-oct-2-ulosonate + CTP = CMP-3-deoxy-beta-D-manno-octulosonate + diphosphate. Its pathway is nucleotide-sugar biosynthesis; CMP-3-deoxy-D-manno-octulosonate biosynthesis; CMP-3-deoxy-D-manno-octulosonate from 3-deoxy-D-manno-octulosonate and CTP: step 1/1. It functions in the pathway bacterial outer membrane biogenesis; lipopolysaccharide biosynthesis. Its function is as follows. Activates KDO (a required 8-carbon sugar) for incorporation into bacterial lipopolysaccharide in Gram-negative bacteria. The sequence is that of 3-deoxy-manno-octulosonate cytidylyltransferase from Anaeromyxobacter sp. (strain Fw109-5).